The primary structure comprises 421 residues: Methionine aminopeptidase 2 (421 aa).

The tract at residues 1-53 is disordered; that stretch reads MTDAEIENSPASDLKELNLENEGVEQQDQAKADESDPVESKKKKNKKKKKKKS. Basic and acidic residues predominate over residues 28–40; the sequence is DQAKADESDPVES. Serine 35 is modified (phosphoserine). Over residues 41 to 53 the composition is skewed to basic residues; it reads KKKKNKKKKKKKS. Residue histidine 174 participates in substrate binding. 3 residues coordinate a divalent metal cation: aspartate 194, aspartate 205, and histidine 274. Histidine 282 lines the substrate pocket. Positions 307 and 402 each coordinate a divalent metal cation.

Belongs to the peptidase M24A family. Methionine aminopeptidase eukaryotic type 2 subfamily. Co(2+) is required as a cofactor. It depends on Zn(2+) as a cofactor. The cofactor is Mn(2+). Fe(2+) serves as cofactor.

It localises to the cytoplasm. It catalyses the reaction Release of N-terminal amino acids, preferentially methionine, from peptides and arylamides.. Functionally, cotranslationally removes the N-terminal methionine from nascent proteins. The N-terminal methionine is often cleaved when the second residue in the primary sequence is small and uncharged (Met-Ala-, Cys, Gly, Pro, Ser, Thr, or Val). The polypeptide is Methionine aminopeptidase 2 (Saccharomyces cerevisiae (strain RM11-1a) (Baker's yeast)).